The chain runs to 61 residues: Small ribosomal subunit protein uS14 (61 aa).

Residues cysteine 24, cysteine 27, cysteine 40, and cysteine 43 each contribute to the Zn(2+) site.

Belongs to the universal ribosomal protein uS14 family. Zinc-binding uS14 subfamily. Part of the 30S ribosomal subunit. Contacts proteins S3 and S10. Zn(2+) serves as cofactor.

Functionally, binds 16S rRNA, required for the assembly of 30S particles and may also be responsible for determining the conformation of the 16S rRNA at the A site. This is Small ribosomal subunit protein uS14 from Acidithiobacillus ferrooxidans (strain ATCC 23270 / DSM 14882 / CIP 104768 / NCIMB 8455) (Ferrobacillus ferrooxidans (strain ATCC 23270)).